The following is a 429-amino-acid chain: Adenylosuccinate synthetase (429 aa).

GTP is bound by residues 12 to 18 and 40 to 42; these read GDEGKGK and GHT. D13 acts as the Proton acceptor in catalysis. Mg(2+) is bound by residues D13 and G40. IMP-binding positions include 13-16, 38-41, T128, R142, Q223, T238, and R302; these read DEGK and NAGH. H41 acts as the Proton donor in catalysis. 298 to 304 is a substrate binding site; that stretch reads VNTGRPR. Residues R304, 330-332, and 412-414 contribute to the GTP site; these read KLD and GVG.

Belongs to the adenylosuccinate synthetase family. Homodimer. The cofactor is Mg(2+).

It is found in the cytoplasm. It carries out the reaction IMP + L-aspartate + GTP = N(6)-(1,2-dicarboxyethyl)-AMP + GDP + phosphate + 2 H(+). The protein operates within purine metabolism; AMP biosynthesis via de novo pathway; AMP from IMP: step 1/2. Its function is as follows. Plays an important role in the de novo pathway of purine nucleotide biosynthesis. Catalyzes the first committed step in the biosynthesis of AMP from IMP. This chain is Adenylosuccinate synthetase, found in Kocuria rhizophila (strain ATCC 9341 / DSM 348 / NBRC 103217 / DC2201).